A 474-amino-acid polypeptide reads, in one-letter code: Shufflon protein A (474 aa).

Residues Met1–Gly361 are constant region. The segment at Thr362–Thr474 is variable region.

In Escherichia coli, this protein is Shufflon protein A.